Reading from the N-terminus, the 120-residue chain is MSERPKTLPPTLRDKKRYIAFKVISENQFNKDEIKEAIWNACLRTLGELGTAKAKPWLIKFDETTQTGIIRCDRNHVYDVIFSLTLVSDINGNKAIIKVLGVSGTIKRLKRKFLSQFGWR.

The protein belongs to the eukaryotic/archaeal RNase P protein component 2 family. As to quaternary structure, consists of a catalytic RNA component and at least 4-5 protein subunits. Forms a subcomplex with Rnp3 which stimulates the catalytic RNA.

It localises to the cytoplasm. It carries out the reaction Endonucleolytic cleavage of RNA, removing 5'-extranucleotides from tRNA precursor.. In terms of biological role, part of ribonuclease P, a protein complex that generates mature tRNA molecules by cleaving their 5'-ends. The RNA is catalytic, but its KM for pre-tRNA is 170-fold decreased in the presence of the 4 known protein subunits (Rnp1-4). The protein subunits also decrease the amount of Mg(2+) needed for activity. The protein is Ribonuclease P protein component 2 of Pyrococcus furiosus (strain ATCC 43587 / DSM 3638 / JCM 8422 / Vc1).